Reading from the N-terminus, the 324-residue chain is Lipid droplet-associated hydrolase (324 aa).

Ser-136 acts as the Nucleophile in catalysis. Catalysis depends on charge relay system residues Asp-270 and His-299.

It belongs to the AB hydrolase superfamily. LDAH family.

The protein resides in the lipid droplet. It is found in the endoplasmic reticulum. The enzyme catalyses a cholesterol ester + H2O = cholesterol + a fatty acid + H(+). In terms of biological role, probable serine lipid hydrolase associated with lipid droplets. Has low cholesterol esterase activity. Appears to lack triglyceride lipase activity. Involved in cholesterol and triglyceride homeostasis; stimulates cellular triglyceride accumulation and cellular cholesterol release. The chain is Lipid droplet-associated hydrolase from Gallus gallus (Chicken).